The chain runs to 368 residues: Cobalt-precorrin-5B C(1)-methyltransferase (368 aa).

The protein belongs to the CbiD family.

It catalyses the reaction Co-precorrin-5B + S-adenosyl-L-methionine = Co-precorrin-6A + S-adenosyl-L-homocysteine. Its pathway is cofactor biosynthesis; adenosylcobalamin biosynthesis; cob(II)yrinate a,c-diamide from sirohydrochlorin (anaerobic route): step 6/10. In terms of biological role, catalyzes the methylation of C-1 in cobalt-precorrin-5B to form cobalt-precorrin-6A. The protein is Cobalt-precorrin-5B C(1)-methyltransferase of Brucella canis (strain ATCC 23365 / NCTC 10854 / RM-666).